Here is a 574-residue protein sequence, read N- to C-terminus: uncharacterized protein (574 aa).

Residues 297–317 (SAASKPRKRKKDEVSGAQVNS) form a disordered region.

This is an uncharacterized protein from Mus musculus (Mouse).